Here is a 139-residue protein sequence, read N- to C-terminus: Arsenate reductase (139 aa).

Residues cysteine 10, cysteine 82, and cysteine 89 each act as nucleophile in the active site. 2 disulfide bridges follow: cysteine 10–cysteine 82 and cysteine 82–cysteine 89.

Belongs to the low molecular weight phosphotyrosine protein phosphatase family. Thioredoxin-coupled ArsC subfamily.

Its subcellular location is the cytoplasm. It catalyses the reaction arsenate + [thioredoxin]-dithiol + H(+) = arsenite + [thioredoxin]-disulfide + H2O. Functionally, catalyzes the reduction of arsenate [As(V)] to arsenite [As(III)]. The chain is Arsenate reductase from Halalkalibacterium halodurans (strain ATCC BAA-125 / DSM 18197 / FERM 7344 / JCM 9153 / C-125) (Bacillus halodurans).